The following is a 155-amino-acid chain: MVNAVAVLKGDSSVSGIVRFEQESEDQQTKISWEITGNDANALRGFHIHTFGDNTNGCTSAGPHFNPFNKNHGAPEDEERHVGDLGNIPTDAQGISKGSLTDKHIKLLGPLSIVGRTVVVHAGQDDLGKGGDAESLKTGNAGARHACGVIGISNA.

Cu cation is bound by residues His47, His49, and His64. Cysteines 58 and 147 form a disulfide. Residues His64, His72, His81, and Asp84 each coordinate Zn(2+). A Cu cation-binding site is contributed by His121. Arg144 serves as a coordination point for substrate.

Belongs to the Cu-Zn superoxide dismutase family. Homodimer. Cu cation is required as a cofactor. The cofactor is Zn(2+).

The protein resides in the cytoplasm. It carries out the reaction 2 superoxide + 2 H(+) = H2O2 + O2. Functionally, destroys radicals which are normally produced within the cells and which are toxic to biological systems. This chain is Superoxide dismutase [Cu-Zn] (SOD1), found in Kluyveromyces lactis (strain ATCC 8585 / CBS 2359 / DSM 70799 / NBRC 1267 / NRRL Y-1140 / WM37) (Yeast).